Reading from the N-terminus, the 279-residue chain is Four and a half LIM domains protein 2 (279 aa).

The segment at 7–31 (CHHCNESLFGKKYILREESPYCVVC) adopts a C4-type zinc-finger fold. LIM zinc-binding domains are found at residues 40–92 (CEEC…CTDC), 101–153 (CQEC…CVPC), and 162–212 (CVQC…CLNC). Lys78 is covalently cross-linked (Glycyl lysine isopeptide (Lys-Gly) (interchain with G-Cter in SUMO2)). Glycyl lysine isopeptide (Lys-Gly) (interchain with G-Cter in SUMO2) cross-links involve residues Lys167 and Lys220. An LIM zinc-binding 4 domain is found at 221–275 (CAGCTNPISGLGGTKYISFEERQWHNDCFNCKKCSLSLVGRGFLTERDDILCPDC). Position 238 is a phosphoserine (Ser238).

As to quaternary structure, interacts with ZNF638 and TTN/titin. Interacts with E4F1. Interacts with GRB7. Interacts with SIRT1 and FOXO1. Interacts with CEFIP. Interacts with calcineurin. Interacts with FOXK1. As to expression, expressed in skeletal muscle and heart.

Its subcellular location is the cytoplasm. The protein resides in the nucleus. It localises to the myofibril. The protein localises to the sarcomere. It is found in the z line. Functionally, may function as a molecular transmitter linking various signaling pathways to transcriptional regulation. Negatively regulates the transcriptional repressor E4F1 and may function in cell growth. Inhibits the transcriptional activity of FOXO1 and its apoptotic function by enhancing the interaction of FOXO1 with SIRT1 and FOXO1 deacetylation. Negatively regulates the calcineurin/NFAT signaling pathway in cardiomyocytes. In Homo sapiens (Human), this protein is Four and a half LIM domains protein 2 (FHL2).